The primary structure comprises 217 residues: Zinc finger CCHC-type and RNA-binding motif-containing protein 1 (217 aa).

Positions 10-88 (STVYVSNLPF…RVIKASIAID (79 aa)) constitute an RRM domain. The CCHC-type zinc finger occupies 105 to 122 (SKCYECGESGHLSYACPK). The interval 120 to 217 (CPKNMLGERE…YFSDEEELSD (98 aa)) is disordered. Residues 145–163 (PEEEIEEVEVSEEEGEDPA) show a composition bias toward acidic residues. 3 positions are modified to phosphoserine: S155, S210, and S216.

Component of the U11/U12 snRNPs that are part of the U12-type spliceosome. Interacts with ZRSR1. Expressed at higher level in heart and testis, and at lower level in cerebellum. Weakly expressed at low level in liver.

It localises to the nucleus. The protein resides in the nucleoplasm. This Mus musculus (Mouse) protein is Zinc finger CCHC-type and RNA-binding motif-containing protein 1 (Zcrb1).